Here is a 420-residue protein sequence, read N- to C-terminus: Small ribosomal subunit protein mS75 (420 aa).

A mitochondrion-targeting transit peptide spans 1 to 11 (MYNLSRIIYRF). Disordered regions lie at residues 99–120 (RQKN…DVMS) and 390–420 (RYSP…GKQT). Polar residues predominate over residues 102–114 (NAANPSSDNTPSD). Positions 396–409 (QKRRSKRKQKRKER) are enriched in basic residues.

Component of the mitochondrial ribosome small subunit. Expressed at high levels in reproductive organs and, at lower levels, ubiquitously.

The protein localises to the mitochondrion. In terms of biological role, essential for fertility (male and female gametophyte functions and development). Required for the integrity of female gametic mitochondria. Modulates male gametophyte functions, including pollen tube growth and style penetration. Involved in mitochondrial-driven cell-to-cell communication in embryo sacs during female gametes maturation (including embryogenesis initiation and endosperm development), especially for reciprocal signaling between central and egg cells which regulates reciprocal development. The chain is Small ribosomal subunit protein mS75 from Arabidopsis thaliana (Mouse-ear cress).